A 429-amino-acid polypeptide reads, in one-letter code: 3-phosphoshikimate 1-carboxyvinyltransferase (429 aa).

3-phosphoshikimate contacts are provided by Lys-20, Ser-21, and Arg-25. Position 20 (Lys-20) interacts with phosphoenolpyruvate. Residues Gly-89 and Arg-118 each contribute to the phosphoenolpyruvate site. 3-phosphoshikimate contacts are provided by Ser-164, Ser-165, Gln-166, Ser-192, Asp-311, and Lys-338. Gln-166 lines the phosphoenolpyruvate pocket. The active-site Proton acceptor is the Asp-311. The phosphoenolpyruvate site is built by Arg-342 and Arg-384.

This sequence belongs to the EPSP synthase family. Monomer.

Its subcellular location is the cytoplasm. The catalysed reaction is 3-phosphoshikimate + phosphoenolpyruvate = 5-O-(1-carboxyvinyl)-3-phosphoshikimate + phosphate. The protein operates within metabolic intermediate biosynthesis; chorismate biosynthesis. In terms of biological role, catalyzes the transfer of the enolpyruvyl moiety of phosphoenolpyruvate (PEP) to the 5-hydroxyl of shikimate-3-phosphate (S3P) to produce enolpyruvyl shikimate-3-phosphate and inorganic phosphate. In Methanococcus vannielii (strain ATCC 35089 / DSM 1224 / JCM 13029 / OCM 148 / SB), this protein is 3-phosphoshikimate 1-carboxyvinyltransferase.